A 310-amino-acid polypeptide reads, in one-letter code: Protoheme IX farnesyltransferase (310 aa).

The next 8 helical transmembrane spans lie at 31 to 51 (VIEL…RGSV), 53 to 73 (PLLI…ANTL), 102 to 122 (NALI…WGTS), 124 to 144 (LLSG…YTLL), 149 to 169 (TSQN…IGWS), 170 to 190 (AVTG…FFWT), 242 to 262 (LATG…FLVM), and 289 to 309 (LAVV…TLLG).

It belongs to the UbiA prenyltransferase family. Protoheme IX farnesyltransferase subfamily.

The protein localises to the cell membrane. It carries out the reaction heme b + (2E,6E)-farnesyl diphosphate + H2O = Fe(II)-heme o + diphosphate. It participates in porphyrin-containing compound metabolism; heme O biosynthesis; heme O from protoheme: step 1/1. Converts heme B (protoheme IX) to heme O by substitution of the vinyl group on carbon 2 of heme B porphyrin ring with a hydroxyethyl farnesyl side group. The chain is Protoheme IX farnesyltransferase from Mycobacterium sp. (strain JLS).